Consider the following 79-residue polypeptide: Short neurotoxin 8 (79 aa).

Residues 1–21 (MKTLLLTLVMVTIMCLDLGYT) form the signal peptide. Disulfide bonds link Cys24–Cys41, Cys34–Cys59, Cys63–Cys71, and Cys72–Cys77.

The protein belongs to the three-finger toxin family. Short-chain subfamily. Type III alpha-neurotoxin sub-subfamily. Expressed by the venom gland.

It is found in the secreted. Binds with high affinity to muscle nicotinic acetylcholine receptor (nAChR) and hinders acetylcholine binding to the receptor, thereby impairing neuromuscular transmission. Causes muscle paralysis, spasms and increased respiration. The chain is Short neurotoxin 8 from Pseudonaja textilis (Eastern brown snake).